Here is a 287-residue protein sequence, read N- to C-terminus: Pantothenate synthetase (287 aa).

30 to 37 contacts ATP; the sequence is MGNLHSGH. Histidine 37 (proton donor) is an active-site residue. Glutamine 61 is a (R)-pantoate binding site. Residue glutamine 61 participates in beta-alanine binding. Residue 149-152 coordinates ATP; the sequence is GEKD. Glutamine 155 contributes to the (R)-pantoate binding site. ATP contacts are provided by residues valine 178 and 186-189; that span reads LSSR.

The protein belongs to the pantothenate synthetase family. Homodimer.

Its subcellular location is the cytoplasm. It catalyses the reaction (R)-pantoate + beta-alanine + ATP = (R)-pantothenate + AMP + diphosphate + H(+). The protein operates within cofactor biosynthesis; (R)-pantothenate biosynthesis; (R)-pantothenate from (R)-pantoate and beta-alanine: step 1/1. Catalyzes the condensation of pantoate with beta-alanine in an ATP-dependent reaction via a pantoyl-adenylate intermediate. The polypeptide is Pantothenate synthetase (Pseudomonas entomophila (strain L48)).